The sequence spans 377 residues: Acetyltransferase ple2 (377 aa).

Residues 1–27 (MKPFSPELLVLSFILLVLSCAIRPAKG) form the signal peptide. 4 helical membrane-spanning segments follow: residues 29–49 (WILW…TTGD), 56–76 (IANN…LTDV), 176–196 (IAAW…ALSL), and 258–278 (PALY…HAIG).

This sequence belongs to the wax synthase family.

The protein localises to the membrane. Its pathway is secondary metabolite biosynthesis; terpenoid biosynthesis. In terms of biological role, acetyltransferase; part of the gene cluster that mediates the biosynthesis of pleuromutilin, a tricyclic diterpene showing antibacterial properties. The geranylgeranyl diphosphate (GGPP) synthase ple4 catalyzes the first step in pleuromutilin biosynthesis. GGPP is then substrate of the premutilin synthase (PS) ple3 to yield premutilin. Premutilin synthase is a bifunctional enzyme composed of the fusion of a class II diterpene cyclase (DTC) and a class I diterpene synthase (DTS), with the corresponding domains and active sites containing characteristic aspartate-rich motifs. GGPP is first converted to mutildienyl-diphosphate (MPP) at the class II DTC site. MPP is subsequently further cyclized at the class I DTS site, followed by a 1,5-hydride shift and addition of water prior to terminating deprotonation, to yield premutilin. The cytochrome P450 monooxygenases ple5 and ple6 hydroxylate premutilin at C-11 and C-3, respectively, producing 11-hydroxypremutilin and 3-hydroxypremutilin. The combination of the actions of both ple5 and ple6 leads to the production of 3,11-dihydroxypremutilin. The short chain dehydrogenase ple7 further converts 3,11-dihydroxypremutilin into mutilin. The acetyltransferase ple2 then acetylates mutilin to produce 14-O-acetylmutilin. Finally, the cytochrome P450 monooxygenase ple1 catalyzes hydroxylation on the alpha position of the acetyl side chain of 14-O-acetylmutilin to yield pleuromutilin. In Rhodocybe pseudopiperita (Clitopilus pseudopiperitus), this protein is Acetyltransferase ple2.